Consider the following 259-residue polypeptide: Insulin-induced gene 1 protein (259 aa).

Residues 1-66 (MPRLHDHVWS…ARPGSWHHDL (66 aa)) lie on the Cytoplasmic side of the membrane. The tract at residues 33 to 57 (PQGPGAPEPEPAPRGQREGTAGFSA) is disordered. Residues 67–89 (VQRSLVLFSFGVVLALVLNLLQI) traverse the membrane as a helical segment. Over 90–108 (QRNVTLFPDEVIATIFSSA) the chain is Extracellular. The chain crosses the membrane as a helical span at residues 109-126 (WWVPPCCGTAAAVVGLLY). At 127–141 (PCIDSHLGEPHKFKR) the chain is on the cytoplasmic side. Glycyl lysine isopeptide (Lys-Gly) (interchain with G-Cter in ubiquitin) cross-links involve residues lysine 138 and lysine 140. The chain crosses the membrane as a helical span at residues 142–164 (EWASVMRCIAVFVGINHASAKLD). Residues 165-167 (FAN) lie on the Extracellular side of the membrane. Residues 168 to 186 (NVQLSLTLAALSLGLWWTF) traverse the membrane as a helical segment. The Cytoplasmic segment spans residues 187–191 (DRSRS). Position 189 is a phosphoserine (serine 189). A helical transmembrane segment spans residues 192 to 213 (GLGLGITIAFLATLITQFLVYN). Residues 214–227 (GVYQYTSPDFLYIR) are Extracellular-facing. The helical transmembrane segment at 228–245 (SWLPCIFFSGGVTVGNIG) threads the bilayer. The Cytoplasmic portion of the chain corresponds to 246 to 259 (RQLAMGVPEKPHSD). The KxHxx motif lies at 253–259 (PEKPHSD).

This sequence belongs to the INSIG family. In terms of assembly, interacts with SCAP; interaction is direct and only takes place in the presence of sterols; it prevents interaction between SCAP and the coat protein complex II (COPII). Associates with the SCAP-SREBP complex (composed of SCAP and SREBF1/SREBP1 or SREBF2/SREBP2); association is mediated via its interaction with SCAP and only takes place in the presence of sterols. Interaction with SCAP is mutually exclusive with PAQR3. Interacts with HMGCR (via its SSD); the interaction, accelerated by sterols, leads to the recruitment of HMGCR to AMFR/gp78 for its ubiquitination by the sterol-mediated ERAD pathway. Interacts with AMFR/gp78 (via its membrane domain); the interaction recruits HMCR at the ER membrane for its ubiquitination and degradation by the sterol-mediated ERAD pathway. Interacts with SOAT2/ACAT2; leading to promote recruitment of AMFR/gp78 and subsequent ubiquitination of SOAT2/ACAT2. Interacts with RNF139. Interacts with RNF145. In terms of processing, phosphorylation at Ser-189 by PCK1 reduces binding to oxysterol, disrupting the interaction between INSIG1 and SCAP, thereby promoting nuclear translocation of SREBP proteins (SREBF1/SREBP1 or SREBF2/SREBP2) and subsequent transcription of downstream lipogenesis-related genes. Post-translationally, ubiquitinated by AMFR/gp78 in response to sterol deprivation, leading to its degradation: when the SCAP-SREBP complex becomes dissociated from INSIG1, INSIG1 is then ubiquitinated and degraded in proteasomes. Although ubiquitination is required for rapid INSIG1 degradation, it is not required for release of the SCAP-SREBP complex. Ubiquitinated by RNF139. Highly expressed in liver and kidney.

It is found in the endoplasmic reticulum membrane. Functionally, oxysterol-binding protein that mediates feedback control of cholesterol synthesis by controlling both endoplasmic reticulum to Golgi transport of SCAP and degradation of HMGCR. Acts as a negative regulator of cholesterol biosynthesis by mediating the retention of the SCAP-SREBP complex in the endoplasmic reticulum, thereby blocking the processing of sterol regulatory element-binding proteins (SREBPs) SREBF1/SREBP1 and SREBF2/SREBP2. Binds oxysterol, including 25-hydroxycholesterol, regulating interaction with SCAP and retention of the SCAP-SREBP complex in the endoplasmic reticulum. In presence of oxysterol, interacts with SCAP, retaining the SCAP-SREBP complex in the endoplasmic reticulum, thereby preventing SCAP from escorting SREBF1/SREBP1 and SREBF2/SREBP2 to the Golgi. Sterol deprivation or phosphorylation by PCK1 reduce oxysterol-binding, disrupting the interaction between INSIG1 and SCAP, thereby promoting Golgi transport of the SCAP-SREBP complex, followed by processing and nuclear translocation of SREBF1/SREBP1 and SREBF2/SREBP2. Also regulates cholesterol synthesis by regulating degradation of HMGCR: initiates the sterol-mediated ubiquitin-mediated endoplasmic reticulum-associated degradation (ERAD) of HMGCR via recruitment of the reductase to the ubiquitin ligases AMFR/gp78 and/or RNF139. Also regulates degradation of SOAT2/ACAT2 when the lipid levels are low: initiates the ubiquitin-mediated degradation of SOAT2/ACAT2 via recruitment of the ubiquitin ligases AMFR/gp78. The polypeptide is Insulin-induced gene 1 protein (Rattus norvegicus (Rat)).